The sequence spans 582 residues: ATP-dependent lipid A-core flippase (582 aa).

The next 6 helical transmembrane spans lie at 27–48 (LVVS…ISLL), 63–85 (FLRI…GFAS), 144–168 (VSIV…WQLS), 170–188 (VLIV…VSKR), 244–266 (LVSA…LFAV), and 283–302 (TFTV…KALT). The 283-residue stretch at 28–310 (VVSTIALVIN…LTSVTSEFQR (283 aa)) folds into the ABC transmembrane type-1 domain. The ABC transporter domain occupies 342-578 (VDVKDVTFTY…DGAYAQLHRI (237 aa)). Residue 376-383 (GRSGSGKS) participates in ATP binding.

This sequence belongs to the ABC transporter superfamily. Lipid exporter (TC 3.A.1.106) family. In terms of assembly, homodimer.

It localises to the cell inner membrane. It catalyses the reaction ATP + H2O + lipid A-core oligosaccharideSide 1 = ADP + phosphate + lipid A-core oligosaccharideSide 2.. In terms of biological role, involved in lipopolysaccharide (LPS) biosynthesis. Translocates lipid A-core from the inner to the outer leaflet of the inner membrane. Transmembrane domains (TMD) form a pore in the inner membrane and the ATP-binding domain (NBD) is responsible for energy generation. Shows ATPase activity. The sequence is that of ATP-dependent lipid A-core flippase from Vibrio cholerae serotype O1 (strain ATCC 39315 / El Tor Inaba N16961).